Here is a 348-residue protein sequence, read N- to C-terminus: uncharacterized protein (348 aa).

Residues 1–26 (MKKRIILLLAVIIAAAAAGVAFYVAK) form the signal peptide.

This is an uncharacterized protein from Bacillus subtilis (strain 168).